Reading from the N-terminus, the 438-residue chain is Actin-like protein 7A (438 aa).

A required for interaction with TES region spans residues 36–56 (ASLKDGPAKRAVWVRRDHSEP).

This sequence belongs to the actin family. As to quaternary structure, interacts (via N-terminus) with TES (via LIM domain 2). Heterodimer with TES; the heterodimer interacts with ENAH to form a heterotrimer. Interacts with ACTL9. Interacts with CYLC1; the interaction may be relevant for proper acrosome attachment to the nuclear envelope.

Its subcellular location is the cytoplasm. The protein localises to the cytoskeleton. It is found in the golgi apparatus. The protein resides in the nucleus. Essential for normal spermatogenesis and male fertility. Required for normal sperm head morphology, acroplaxome formation, acrosome attachment, and acrosome granule stability. May anchor and stabilize acrosomal adherence to the acroplaxome at least in part by facilitating the presence of F-actin in the subacrosomal space. May play an important role in formation and fusion of Golgi-derived vesicles during acrosome biogenesis. The protein is Actin-like protein 7A (ACTL7A) of Bos taurus (Bovine).